A 101-amino-acid chain; its full sequence is Small ribosomal subunit protein bS18c (101 aa).

It belongs to the bacterial ribosomal protein bS18 family. Part of the 30S ribosomal subunit.

It localises to the plastid. It is found in the chloroplast. The sequence is that of Small ribosomal subunit protein bS18c (rps18) from Arabidopsis thaliana (Mouse-ear cress).